Here is a 307-residue protein sequence, read N- to C-terminus: uncharacterized protein (307 aa).

The EAL domain maps to 54-307; that stretch reads RHYLSTSMRV…KALPVDFFRE (254 aa). 2 helical membrane passes run 158–178 and 203–223; these read PGFLVLVEGVLGETGLPAHAL and ALGVGIAIDDFGIGFSSLAYL.

Its subcellular location is the cell membrane. This is an uncharacterized protein from Mycobacterium tuberculosis (strain CDC 1551 / Oshkosh).